We begin with the raw amino-acid sequence, 905 residues long: Coatomer subunit beta' (905 aa).

8 WD repeats span residues 13–52, 55–94, 97–136, 140–180, 183–224, 227–266, 350–388, and 390–425; these read ARSDRVKSVDLHPTEPWMLASLYNGSVCVWNHETQTLVKT, VCDLPVRAAKFVARKNWVVTGADDMQIRVFNYNTLERVHM, AHSDYIRCIAVHPTQPFILTSSDDMLIKLWDWDKKWSCSQ, GHTH…PNFT, GHEK…CVQT, GHAQNVSCASFHPELPIIITGSEDGTVRIWHSSTYRLEST, SCEIYPQTIQHNPNGRFVVVCGDGEYIIYTAMALRNKSF, and SAQEFAWAHDSSEYAIRESNSIVKIFKNFKEKKSFK. Lys-627 is subject to N6-acetyllysine. The WD 9 repeat unit spans residues 746–783; sequence IRTGRLPEAAFLARTYLPSQVSRVVKLWRENLSKVNQK. The interval 837 to 873 is disordered; the sequence is EEAKGFQPSRPTAQQEPDGKPASSPVIMASQTTHKEE. Ser-859 is subject to Phosphoserine. The stretch at 867 to 891 forms a coiled coil; sequence QTTHKEEKSLLELEVDLDNLELEDI.

The protein belongs to the WD repeat COPB2 family. In terms of assembly, oligomeric complex that consists of at least the alpha, beta, beta', gamma, delta, epsilon and zeta subunits. Probably interacts with PEX11A. Interacts with SCYL1. Interacts with JAGN1.

Its subcellular location is the cytoplasm. The protein localises to the cytosol. It localises to the golgi apparatus membrane. It is found in the cytoplasmic vesicle. The protein resides in the COPI-coated vesicle membrane. Functionally, the coatomer is a cytosolic protein complex that binds to dilysine motifs and reversibly associates with Golgi non-clathrin-coated vesicles, which further mediate biosynthetic protein transport from the ER, via the Golgi up to the trans Golgi network. Coatomer complex is required for budding from Golgi membranes, and is essential for the retrograde Golgi-to-ER transport of dilysine-tagged proteins. In mammals, the coatomer can only be recruited by membranes associated to ADP-ribosylation factors (ARFs), which are small GTP-binding proteins; the complex also influences the Golgi structural integrity, as well as the processing, activity, and endocytic recycling of LDL receptors. This coatomer complex protein, essential for Golgi budding and vesicular trafficking, is a selective binding protein (RACK) for protein kinase C, epsilon type. It binds to Golgi membranes in a GTP-dependent manner. This is Coatomer subunit beta' (Copb2) from Mus musculus (Mouse).